Reading from the N-terminus, the 302-residue chain is tRNA pseudouridine synthase B (302 aa).

Residue Asp43 is the Nucleophile of the active site.

This sequence belongs to the pseudouridine synthase TruB family. Type 1 subfamily.

The catalysed reaction is uridine(55) in tRNA = pseudouridine(55) in tRNA. Responsible for synthesis of pseudouridine from uracil-55 in the psi GC loop of transfer RNAs. The chain is tRNA pseudouridine synthase B from Burkholderia mallei (strain NCTC 10247).